Here is a 464-residue protein sequence, read N- to C-terminus: Probable glycine dehydrogenase (decarboxylating) subunit 1 (464 aa).

It belongs to the GcvP family. N-terminal subunit subfamily. The glycine cleavage system is composed of four proteins: P, T, L and H. In this organism, the P 'protein' is a heterodimer of two subunits.

It catalyses the reaction N(6)-[(R)-lipoyl]-L-lysyl-[glycine-cleavage complex H protein] + glycine + H(+) = N(6)-[(R)-S(8)-aminomethyldihydrolipoyl]-L-lysyl-[glycine-cleavage complex H protein] + CO2. Functionally, the glycine cleavage system catalyzes the degradation of glycine. The P protein binds the alpha-amino group of glycine through its pyridoxal phosphate cofactor; CO(2) is released and the remaining methylamine moiety is then transferred to the lipoamide cofactor of the H protein. This Thiobacillus denitrificans (strain ATCC 25259 / T1) protein is Probable glycine dehydrogenase (decarboxylating) subunit 1.